Consider the following 77-residue polypeptide: Small ribosomal subunit protein bS18 (77 aa).

The protein belongs to the bacterial ribosomal protein bS18 family. Part of the 30S ribosomal subunit. Forms a tight heterodimer with protein bS6.

Functionally, binds as a heterodimer with protein bS6 to the central domain of the 16S rRNA, where it helps stabilize the platform of the 30S subunit. This Desulforamulus reducens (strain ATCC BAA-1160 / DSM 100696 / MI-1) (Desulfotomaculum reducens) protein is Small ribosomal subunit protein bS18.